Consider the following 201-residue polypeptide: Small ribosomal subunit protein uS4c (201 aa).

The disordered stretch occupies residues 15–43 (LGALPGLTSKRPRSGSDLRNQSRSGKRSQ). Residues 89 to 150 (MRLDNILFRL…KERSRALIQN (62 aa)) form the S4 RNA-binding domain.

It belongs to the universal ribosomal protein uS4 family. As to quaternary structure, part of the 30S ribosomal subunit. Contacts protein S5. The interaction surface between S4 and S5 is involved in control of translational fidelity.

It localises to the plastid. The protein resides in the chloroplast. One of the primary rRNA binding proteins, it binds directly to 16S rRNA where it nucleates assembly of the body of the 30S subunit. Functionally, with S5 and S12 plays an important role in translational accuracy. The sequence is that of Small ribosomal subunit protein uS4c (rps4) from Amborella trichopoda.